Consider the following 275-residue polypeptide: Nitrogenase iron protein 3 (275 aa).

Position 9-16 (9-16 (GKGGIGKS)) interacts with ATP. Cys-97 serves as a coordination point for [4Fe-4S] cluster. The residue at position 100 (Arg-100) is an ADP-ribosylarginine; by dinitrogenase reductase ADP-ribosyltransferase. Cys-132 is a [4Fe-4S] cluster binding site.

It belongs to the NifH/BchL/ChlL family. In terms of assembly, homodimer. [4Fe-4S] cluster serves as cofactor. Post-translationally, the reversible ADP-ribosylation of Arg-100 inactivates the nitrogenase reductase and regulates nitrogenase activity.

The enzyme catalyses N2 + 8 reduced [2Fe-2S]-[ferredoxin] + 16 ATP + 16 H2O = H2 + 8 oxidized [2Fe-2S]-[ferredoxin] + 2 NH4(+) + 16 ADP + 16 phosphate + 6 H(+). Its function is as follows. The key enzymatic reactions in nitrogen fixation are catalyzed by the nitrogenase complex, which has 2 components: the iron protein and the molybdenum-iron protein. In Clostridium pasteurianum, this protein is Nitrogenase iron protein 3 (nifH3).